Reading from the N-terminus, the 322-residue chain is MFEIHPVKKVSVVIPVYNEQESLPELIRRTTKACESLGKEYEILLIDDGSSDNSAHMLVEASQAEGSHIVSILLNRNYGQHSAIMAGFSHVTGDLIITLDADLQNPPEEIPRLVAKADEGYDVVGTVRQNRQDSWFRKTASKMINRLIQRTTGKAMGDYGCMLRAYRRHIVDAMLHCHERSTFIPILANIFARRAIEIPVHHAEREFGESKYSFMRLINLMYDLVTCLTTTPLRMLSLLGSIIAIGGFSIAVLLVILRLTFGPQWAAEGVFMLFAVLFTFIGAQFIGMGLLGEYIGRIYTDVRARPRYFVQQVIRPSSKENE.

Residues 1 to 235 lie on the Cytoplasmic side of the membrane; sequence MFEIHPVKKV…TCLTTTPLRM (235 aa). The chain crosses the membrane as a helical span at residues 236 to 256; that stretch reads LSLLGSIIAIGGFSIAVLLVI. Topologically, residues 257 to 269 are periplasmic; the sequence is LRLTFGPQWAAEG. A helical membrane pass occupies residues 270–290; the sequence is VFMLFAVLFTFIGAQFIGMGL. Over 291 to 322 the chain is Cytoplasmic; it reads LGEYIGRIYTDVRARPRYFVQQVIRPSSKENE.

Belongs to the glycosyltransferase 2 family.

The protein localises to the cell inner membrane. It carries out the reaction UDP-4-deoxy-4-formamido-beta-L-arabinose + di-trans,octa-cis-undecaprenyl phosphate = 4-deoxy-4-formamido-alpha-L-arabinopyranosyl di-trans,octa-cis-undecaprenyl phosphate + UDP. Its pathway is glycolipid biosynthesis; 4-amino-4-deoxy-alpha-L-arabinose undecaprenyl phosphate biosynthesis; 4-amino-4-deoxy-alpha-L-arabinose undecaprenyl phosphate from UDP-4-deoxy-4-formamido-beta-L-arabinose and undecaprenyl phosphate: step 1/2. The protein operates within bacterial outer membrane biogenesis; lipopolysaccharide biosynthesis. Catalyzes the transfer of 4-deoxy-4-formamido-L-arabinose from UDP to undecaprenyl phosphate. The modified arabinose is attached to lipid A and is required for resistance to polymyxin and cationic antimicrobial peptides. In Escherichia coli (strain SMS-3-5 / SECEC), this protein is Undecaprenyl-phosphate 4-deoxy-4-formamido-L-arabinose transferase.